The sequence spans 704 residues: Probable ferric reduction oxidase 1 (704 aa).

Residues 1-16 (MGVGEMNKEVIDKVIK) are Cytoplasmic-facing. Residues 17-36 (FLMMVILMGTIVIWIMMPTS) traverse the membrane as a helical segment. Over 37 to 62 (TYKEIWLTSMRAKLGKSIYYGRPGVN) the chain is Lumenal. A helical membrane pass occupies residues 63-81 (LLVYMFPMILLAFLGCIYL). Residues 82–115 (HLKKSTTVNQFNSGVEKKRAKFGALRRPMLVNGP) are Cytoplasmic-facing. Residues 116-139 (LGIVTVTEVMFLTMFMALLLWSLA) form a helical membrane-spanning segment. At 140-207 (NYMYRTFVNV…VGLTSESSIK (68 aa)) the chain is on the lumenal side. The 121-residue stretch at 174 to 294 (GIVGNICLAF…YLYIVFMLFF (121 aa)) folds into the Ferric oxidoreductase domain. A helical transmembrane segment spans residues 208–231 (YHIWLGHLVMIIFTSHGLCYFIYW). Residues His209 and His223 each contribute to the heme site. Residues 232–282 (ISKNQLVSKMLEWDRTAVSNLAGEIALVAGLMMWVTTYPKIRRRLFEVFFY) lie on the Cytoplasmic side of the membrane. The helical transmembrane segment at 283 to 307 (SHYLYIVFMLFFVFHVGISHALIPL) threads the bilayer. Heme-binding residues include His284 and His297. The Lumenal segment spans residues 308 to 329 (PGFYIFLVDRFLRFLQSRNNVK). Residues 323–430 (QSRNNVKLVS…EGPYGPSSTD (108 aa)) form the FAD-binding FR-type domain. The chain crosses the membrane as a helical span at residues 330–350 (LVSARVLPCDTVELNFSKNPM). Residues 351–550 (LMYSPTSTMF…PISPILGPNS (200 aa)) lie on the Cytoplasmic side of the membrane. 372–375 (HPFT) lines the FAD pocket. NAD(+) is bound at residue 422 to 425 (GPYG). A helical transmembrane segment spans residues 551–573 (WLCLAAILSSSFMIFIVIIAIIT). The Lumenal segment spans residues 574–592 (RYHIHPIDQNSEKYTWAYK). The chain crosses the membrane as a helical span at residues 593-614 (SLIYLVSISITVVTTSTAAMLW). Residues 615–704 (NKKKYYAKND…LHFESISFSW (90 aa)) are Cytoplasmic-facing.

The protein belongs to the ferric reductase (FRE) family. FAD is required as a cofactor. As to expression, expressed in siliques. Detected in roots.

The protein resides in the membrane. The catalysed reaction is 2 a Fe(II)-siderophore + NAD(+) + H(+) = 2 a Fe(III)-siderophore + NADH. Its function is as follows. Ferric chelate reductase involved in iron reduction in roots. May participate in the transport of electrons to a Fe(3+) ion via FAD and heme intermediates. The protein is Probable ferric reduction oxidase 1 (FRO1) of Arabidopsis thaliana (Mouse-ear cress).